The following is a 379-amino-acid chain: Homoserine O-acetyltransferase (379 aa).

An AB hydrolase-1 domain is found at 54-332; sequence NAILVCHALS…PYQSEEIVKS (279 aa). S159 (nucleophile) is an active-site residue. R228 provides a ligand contact to substrate. Active-site residues include D318 and H352. A substrate-binding site is contributed by D353.

The protein belongs to the AB hydrolase superfamily. MetX family. Homodimer.

Its subcellular location is the cytoplasm. The catalysed reaction is L-homoserine + acetyl-CoA = O-acetyl-L-homoserine + CoA. It functions in the pathway amino-acid biosynthesis; L-methionine biosynthesis via de novo pathway; O-acetyl-L-homoserine from L-homoserine: step 1/1. Its function is as follows. Transfers an acetyl group from acetyl-CoA to L-homoserine, forming acetyl-L-homoserine. This is Homoserine O-acetyltransferase from Leptospira meyeri.